Here is a 135-residue protein sequence, read N- to C-terminus: Small ribosomal subunit protein bS16 (135 aa).

The span at 105–120 shows a compositional bias: basic and acidic residues; it reads DEKKKPVLKPKTEKAA. Residues 105–135 are disordered; that stretch reads DEKKKPVLKPKTEKAAPEAAAPEAEATEEQA.

This sequence belongs to the bacterial ribosomal protein bS16 family.

In Clavibacter sepedonicus (Clavibacter michiganensis subsp. sepedonicus), this protein is Small ribosomal subunit protein bS16.